An 80-amino-acid polypeptide reads, in one-letter code: Exodeoxyribonuclease 7 small subunit (80 aa).

The protein belongs to the XseB family. Heterooligomer composed of large and small subunits.

The protein resides in the cytoplasm. The enzyme catalyses Exonucleolytic cleavage in either 5'- to 3'- or 3'- to 5'-direction to yield nucleoside 5'-phosphates.. Functionally, bidirectionally degrades single-stranded DNA into large acid-insoluble oligonucleotides, which are then degraded further into small acid-soluble oligonucleotides. This is Exodeoxyribonuclease 7 small subunit from Vibrio atlanticus (strain LGP32) (Vibrio splendidus (strain Mel32)).